The primary structure comprises 445 residues: Tubulin beta-3 chain (445 aa).

The MREI motif motif lies at 1 to 4; it reads MREI. Glutamine 11, glutamate 69, serine 138, glycine 142, threonine 143, glycine 144, asparagine 204, and asparagine 226 together coordinate GTP. Glutamate 69 contributes to the Mg(2+) binding site. The interval 425–445 is disordered; sequence YQDATAEEEGEFEEEAEEEAE. The span at 429 to 445 shows a compositional bias: acidic residues; sequence TAEEEGEFEEEAEEEAE. Position 438 is a 5-glutamyl polyglutamate (glutamate 438).

Belongs to the tubulin family. In terms of assembly, dimer of alpha and beta chains. A typical microtubule is a hollow water-filled tube with an outer diameter of 25 nm and an inner diameter of 15 nM. Alpha-beta heterodimers associate head-to-tail to form protofilaments running lengthwise along the microtubule wall with the beta-tubulin subunit facing the microtubule plus end conferring a structural polarity. Microtubules usually have 13 protofilaments but different protofilament numbers can be found in some organisms and specialized cells. The cofactor is Mg(2+). In terms of processing, some glutamate residues at the C-terminus are polyglycylated, resulting in polyglycine chains on the gamma-carboxyl group. Glycylation is mainly limited to tubulin incorporated into axonemes (cilia and flagella) whereas glutamylation is prevalent in neuronal cells, centrioles, axonemes, and the mitotic spindle. Both modifications can coexist on the same protein on adjacent residues, and lowering polyglycylation levels increases polyglutamylation, and reciprocally. The precise function of polyglycylation is still unclear. Post-translationally, some glutamate residues at the C-terminus are polyglutamylated, resulting in polyglutamate chains on the gamma-carboxyl group. Polyglutamylation plays a key role in microtubule severing by spastin (SPAST). SPAST preferentially recognizes and acts on microtubules decorated with short polyglutamate tails: severing activity by SPAST increases as the number of glutamates per tubulin rises from one to eight, but decreases beyond this glutamylation threshold. As to expression, highly expressed in testis.

It localises to the cytoplasm. The protein resides in the cytoskeleton. Functionally, tubulin is the major constituent of microtubules, a cylinder consisting of laterally associated linear protofilaments composed of alpha- and beta-tubulin heterodimers. Microtubules grow by the addition of GTP-tubulin dimers to the microtubule end, where a stabilizing cap forms. Below the cap, tubulin dimers are in GDP-bound state, owing to GTPase activity of alpha-tubulin. TUBB3 plays a role in dorsal root ganglion axon projection towards the spinal cord. The polypeptide is Tubulin beta-3 chain (Gallus gallus (Chicken)).